Reading from the N-terminus, the 373-residue chain is Spermidine/putrescine import ATP-binding protein PotA (373 aa).

The ABC transporter domain maps to 11–241 (IELRSLKKSY…PSNLFVAKFI (231 aa)). Residue 43–50 (GPSGCGKT) participates in ATP binding.

It belongs to the ABC transporter superfamily. Spermidine/putrescine importer (TC 3.A.1.11.1) family. The complex is composed of two ATP-binding proteins (PotA), two transmembrane proteins (PotB and PotC) and a solute-binding protein (PotD).

The protein localises to the cell inner membrane. The enzyme catalyses ATP + H2O + polyamine-[polyamine-binding protein]Side 1 = ADP + phosphate + polyamineSide 2 + [polyamine-binding protein]Side 1.. Part of the ABC transporter complex PotABCD involved in spermidine/putrescine import. Responsible for energy coupling to the transport system. The chain is Spermidine/putrescine import ATP-binding protein PotA from Mannheimia succiniciproducens (strain KCTC 0769BP / MBEL55E).